The primary structure comprises 541 residues: Presenilin homolog (541 aa).

Polar residues-rich tracts occupy residues 1-14 and 43-52; these read MAAV…SSGL and NNYGSSNQDQ. Disordered regions lie at residues 1–52 and 69–92; these read MAAV…NQDQ and CGSR…NEME. Residues 1 to 106 lie on the Cytoplasmic side of the membrane; it reads MAAVNLQASC…LKYGAQHVIK (106 aa). The helical transmembrane segment at 107 to 127 threads the bilayer; sequence LFVPVSLCMLVVVATINSISF. The Lumenal segment spans residues 128 to 154; it reads YNSTDVYLLYTPFHEQSPEPSVKFWSA. A glycan (N-linked (GlcNAc...) asparagine) is linked at asparagine 129. A helical membrane pass occupies residues 155–175; the sequence is LANSLILMSVVVVMTFLLIVL. Topologically, residues 176-182 are cytoplasmic; it reads YKKRCYR. The helical transmembrane segment at 183 to 203 threads the bilayer; it reads IIHGWLILSSFMLLFIFTYLY. The Lumenal portion of the chain corresponds to 204–216; it reads LEELLRAYNIPMD. A helical transmembrane segment spans residues 217-237; that stretch reads YPTALLIMWNFGVVGMMSIHW. Over 238–242 the chain is Cytoplasmic; the sequence is QGPLR. Residues 243–263 traverse the membrane as a helical segment; it reads LQQGYLIFVAALMALVFIKYL. Over 264–265 the chain is Lumenal; it reads PE. Residues 266–286 form a helical membrane-spanning segment; the sequence is WTAWAVLAAISIWDLIAVLSP. Aspartate 279 is an active-site residue. At 287-453 the chain is on the cytoplasmic side; that stretch reads RGPLRILVET…QNHPDGQEER (167 aa). Residues 320–481 are interaction with Mettl2; sequence NTVTPQQSQA…ASSYGDWTTT (162 aa). The segment covering 327-350 has biased composition (low complexity); the sequence is SQATASSSPSSSNSTTTTRATQNS. 2 disordered regions span residues 327 to 379 and 421 to 449; these read SQAT…DGSV and EVQS…HPDG. Polar residues-rich tracts occupy residues 361–370 and 421–443; these read GQRTGNSHPR and EVQS…TAPD. The chain crosses the membrane as a helical span at residues 454-474; that stretch reads GIKLGLGDFIFYSVLVGKASS. Aspartate 461 is a catalytic residue. Residues 475–481 are Lumenal-facing; the sequence is YGDWTTT. A helical membrane pass occupies residues 482–502; sequence IACFVAILIGLCLTLLLLAIW. Residues 503 to 506 lie on the Cytoplasmic side of the membrane; the sequence is RKAL. The PAL motif lies at 507-509; sequence PAL. The helical intramembrane region spans 507–527; that stretch reads PALPISITFGLIFCFATSAVV. Over 528-541 the chain is Cytoplasmic; sequence KPFMEDLSAKQVFI.

Belongs to the peptidase A22A family. As to quaternary structure, homodimer. Component of the gamma-secretase complex, a complex composed of a presenilin (Psn) homodimer, nicastrin (Nct), Aph-1 and Pen-2. Interacts with Mettl2. Isoform 2 shows a better interaction with Mettl2 than isoform 1. Post-translationally, cleaved. The cleavage, which probably takes place between the 6th and the 7th transmembrane regions, may be required for activation of the gamma-secretase activity. As to expression, maternally expressed in nurse and follicle cells. In early embryos, expressed in all or most cells and later increases in CNS and epidermal tissues. In larvae, expression is seen in all imaginal disks, brain and optic lobes. In pupae, expression is seen in eye disk and brain.

Its subcellular location is the endoplasmic reticulum membrane. The protein localises to the golgi apparatus membrane. In terms of biological role, probable catalytic subunit of the gamma-secretase complex, an endoprotease complex that catalyzes the intramembrane cleavage of integral membrane proteins such as Notch receptor. Required for S3 cleavage of Notch, which releases activated Notch protein from the cell membrane. Involved in the patterning of the optic lobes. The sequence is that of Presenilin homolog (Psn) from Drosophila melanogaster (Fruit fly).